The primary structure comprises 683 residues: Leucine-rich repeat protein soc-2 homolog (683 aa).

Residues 1–19 are compositionally biased toward low complexity; that stretch reads MNLCSSGATASTTSLSSTG. Disordered regions lie at residues 1–54 and 74–150; these read MNLC…SDVS and GTDE…IQAD. The segment covering 26 to 49 has biased composition (gly residues); sequence GVPGGGAEGGGGGGGSGNSGGGGK. Low complexity predominate over residues 74-86; that stretch reads GTDELSNANSPAN. Positions 99–117 are enriched in polar residues; that stretch reads QQPTGSNGHSHLHNENNAN. 20 LRR repeats span residues 164 to 185, 187 to 208, 210 to 231, 233 to 254, 256 to 277, 279 to 300, 302 to 323, 325 to 346, 348 to 370, 371 to 392, 395 to 416, 419 to 440, 443 to 464, 466 to 487, 489 to 510, 512 to 533, 535 to 556, 558 to 579, 581 to 603, and 605 to 626; these read GIKR…VKEC, HLTE…IGCL, SLRN…LQNC, QLKV…IYRL, SLTT…LRQL, NLTM…IGAL, NLTT…IGNC, NLSA…IGNL, SLVR…KNCK, SMDE…MLAS, GLTT…GPAQ, NVYS…IFSR, GLTK…IGTW, NMVE…IMNL, NLEI…IGNL, RLRI…IGLL, ELQR…IGHL, NLTH…IGSL, SLEN…LALC, and NLKY…IQAG. Positions 661–671 are enriched in gly residues; the sequence is AGGNGGGGAAA. The disordered stretch occupies residues 661 to 683; the sequence is AGGNGGGGAAAAGGSASRSSDRR. A compositionally biased stretch (low complexity) spans 672–683; the sequence is AGGSASRSSDRR.

It belongs to the SHOC2 family.

Its function is as follows. Acts as a Ras effector and participates in MAPK pathway activation. Probably acts as a regulatory subunit of protein phosphatase that specifically dephosphorylates Raf kinase and stimulate Raf activity at specialized signaling complexes upon Ras activation. The chain is Leucine-rich repeat protein soc-2 homolog (Sur-8) from Drosophila sechellia (Fruit fly).